The sequence spans 150 residues: Snaclec rhinocetin subunit beta (150 aa).

The N-terminal stretch at 1 to 23 (MGRFIFLSSGLLVVFLSLSGTGA) is a signal peptide. Cystine bridges form between C27–C38, C55–C144, and C121–C136. Residues 34-145 (YEGYCYKVFK…CNRQQYFVCK (112 aa)) enclose the C-type lectin domain.

This sequence belongs to the snaclec family. In terms of assembly, heterodimer; disulfide-linked. Expressed by the venom gland.

Its subcellular location is the secreted. Its function is as follows. Antagonist of the alpha-2 subunit of the integrin alpha-2/beta-1 (ITGA2/ITGB1) on human platelets and endothelial cells. This protein inhibits collagen-stimulated activation of human platelets in a dose-dependent manner. In addition, it antagonizes the binding of monoclonal antibodies against the alpha-2 subunit of integrin alpha-2/beta-1 to platelets and it coimmunoprecipitates with this integrin. The protein is Snaclec rhinocetin subunit beta of Bitis rhinoceros (West African gaboon viper).